The primary structure comprises 68 residues: Large ribosomal subunit protein uL29 (68 aa).

Belongs to the universal ribosomal protein uL29 family.

The polypeptide is Large ribosomal subunit protein uL29 (Finegoldia magna (strain ATCC 29328 / DSM 20472 / WAL 2508) (Peptostreptococcus magnus)).